A 187-amino-acid polypeptide reads, in one-letter code: Ribosome-recycling factor (187 aa).

It belongs to the RRF family.

It is found in the cytoplasm. Responsible for the release of ribosomes from messenger RNA at the termination of protein biosynthesis. May increase the efficiency of translation by recycling ribosomes from one round of translation to another. The polypeptide is Ribosome-recycling factor (Methylorubrum populi (strain ATCC BAA-705 / NCIMB 13946 / BJ001) (Methylobacterium populi)).